The primary structure comprises 341 residues: Ketol-acid reductoisomerase (NADP(+)) (341 aa).

The region spanning 2–181 (AKVYYNGDAN…GAARAGVLET (180 aa)) is the KARI N-terminal Rossmann domain. Residues 25-28 (YGSQ), arginine 48, serine 52, and 82-85 (DEKQ) contribute to the NADP(+) site. Histidine 107 is a catalytic residue. Glycine 133 lines the NADP(+) pocket. A KARI C-terminal knotted domain is found at 182 to 327 (TFKEETETDL…RELRSMMPFV (146 aa)). 4 residues coordinate Mg(2+): aspartate 190, glutamate 194, glutamate 226, and glutamate 230. Serine 251 contributes to the substrate binding site.

Belongs to the ketol-acid reductoisomerase family. Requires Mg(2+) as cofactor.

It catalyses the reaction (2R)-2,3-dihydroxy-3-methylbutanoate + NADP(+) = (2S)-2-acetolactate + NADPH + H(+). The enzyme catalyses (2R,3R)-2,3-dihydroxy-3-methylpentanoate + NADP(+) = (S)-2-ethyl-2-hydroxy-3-oxobutanoate + NADPH + H(+). It participates in amino-acid biosynthesis; L-isoleucine biosynthesis; L-isoleucine from 2-oxobutanoate: step 2/4. Its pathway is amino-acid biosynthesis; L-valine biosynthesis; L-valine from pyruvate: step 2/4. Its function is as follows. Involved in the biosynthesis of branched-chain amino acids (BCAA). Catalyzes an alkyl-migration followed by a ketol-acid reduction of (S)-2-acetolactate (S2AL) to yield (R)-2,3-dihydroxy-isovalerate. In the isomerase reaction, S2AL is rearranged via a Mg-dependent methyl migration to produce 3-hydroxy-3-methyl-2-ketobutyrate (HMKB). In the reductase reaction, this 2-ketoacid undergoes a metal-dependent reduction by NADPH to yield (R)-2,3-dihydroxy-isovalerate. The sequence is that of Ketol-acid reductoisomerase (NADP(+)) from Geobacillus kaustophilus (strain HTA426).